The following is a 141-amino-acid chain: Hemoglobin subunit alpha (141 aa).

Residues 1–141 (VLSPADKTNV…VSTVLTSKYR (141 aa)) form the Globin domain. Position 3 is a phosphoserine (S3). K7 bears the N6-succinyllysine mark. T8 is subject to Phosphothreonine. The residue at position 11 (K11) is an N6-succinyllysine. K16 is modified (N6-acetyllysine; alternate). Residue K16 is modified to N6-succinyllysine; alternate. A Phosphotyrosine modification is found at Y24. S35 is modified (phosphoserine). The residue at position 40 (K40) is an N6-succinyllysine. A Phosphoserine modification is found at S49. H58 provides a ligand contact to O2. Position 87 (H87) interacts with heme b. S102 carries the phosphoserine modification. T108 bears the Phosphothreonine mark. S124 bears the Phosphoserine mark. 2 positions are modified to phosphothreonine: T134 and T137. A Phosphoserine modification is found at S138.

This sequence belongs to the globin family. Heterotetramer of two alpha chains and two beta chains. In terms of tissue distribution, red blood cells.

Functionally, involved in oxygen transport from the lung to the various peripheral tissues. Hemopressin acts as an antagonist peptide of the cannabinoid receptor CNR1. Hemopressin-binding efficiently blocks cannabinoid receptor CNR1 and subsequent signaling. The polypeptide is Hemoglobin subunit alpha (HBA) (Martes foina (Beech marten)).